We begin with the raw amino-acid sequence, 559 residues long: Small ribosomal subunit protein bS1 (559 aa).

6 S1 motif domains span residues 21-87 (GAII…LSRE), 105-171 (DEVV…VSRR), 192-260 (GQQV…LGLK), 277-347 (GTRV…LGIK), 364-434 (GDRI…LGIK), and 451-520 (GSIV…LSVK).

It belongs to the bacterial ribosomal protein bS1 family.

Its function is as follows. Binds mRNA; thus facilitating recognition of the initiation point. It is needed to translate mRNA with a short Shine-Dalgarno (SD) purine-rich sequence. This chain is Small ribosomal subunit protein bS1 (rpsA), found in Pseudomonas aeruginosa (strain ATCC 15692 / DSM 22644 / CIP 104116 / JCM 14847 / LMG 12228 / 1C / PRS 101 / PAO1).